The primary structure comprises 189 residues: GTP cyclohydrolase 1 (189 aa).

Residues Cys-78, His-81, and Cys-150 each coordinate Zn(2+).

This sequence belongs to the GTP cyclohydrolase I family. In terms of assembly, homomer.

The catalysed reaction is GTP + H2O = 7,8-dihydroneopterin 3'-triphosphate + formate + H(+). It participates in cofactor biosynthesis; 7,8-dihydroneopterin triphosphate biosynthesis; 7,8-dihydroneopterin triphosphate from GTP: step 1/1. The chain is GTP cyclohydrolase 1 from Bacillus anthracis (strain A0248).